A 109-amino-acid chain; its full sequence is SIAFSRAVFAEFLATLLFVFFGLGSALNWPSALPSTLQIAMAFGLGIGTLVQALGHVSGAHINPAVTVACLVGCHVSFLRAAFYVAAQLLGAVAGAALLHEITPAEVRG.

Over 1 to 6 (SIAFSR) the chain is Cytoplasmic. A helical membrane pass occupies residues 7–27 (AVFAEFLATLLFVFFGLGSAL). Residues 28–35 (NWPSALPS) lie on the Extracellular side of the membrane. A helical transmembrane segment spans residues 36–54 (TLQIAMAFGLGIGTLVQAL). Residues 55 to 59 (GHVSG) lie on the Cytoplasmic side of the membrane. Positions 60-69 (AHINPAVTVA) form an intramembrane region, discontinuously helical. An NPA 1 motif is present at residues 63–65 (NPA). The Cytoplasmic portion of the chain corresponds to 70 to 80 (CLVGCHVSFLR). A helical transmembrane segment spans residues 81 to 102 (AAFYVAAQLLGAVAGAALLHEI). The Extracellular segment spans residues 103–109 (TPAEVRG).

The protein belongs to the MIP/aquaporin (TC 1.A.8) family. In terms of assembly, homotetramer. Serine phosphorylation is necessary and sufficient for expression at the apical membrane. Endocytosis is not phosphorylation-dependent. In terms of processing, N-glycosylated.

Its subcellular location is the apical cell membrane. It localises to the basolateral cell membrane. It is found in the cell membrane. The protein localises to the cytoplasmic vesicle membrane. The protein resides in the golgi apparatus. Its subcellular location is the trans-Golgi network membrane. The catalysed reaction is H2O(in) = H2O(out). It carries out the reaction glycerol(in) = glycerol(out). Forms a water-specific channel that provides the plasma membranes of renal collecting duct with high permeability to water, thereby permitting water to move in the direction of an osmotic gradient. Plays an essential role in renal water homeostasis. Could also be permeable to glycerol. This chain is Aquaporin-2, found in Oryctolagus cuniculus (Rabbit).